Reading from the N-terminus, the 503-residue chain is ATP synthase subunit alpha (503 aa).

169–176 is an ATP binding site; it reads GDRSTGKT.

Belongs to the ATPase alpha/beta chains family. F-type ATPases have 2 components, CF(1) - the catalytic core - and CF(0) - the membrane proton channel. CF(1) has five subunits: alpha(3), beta(3), gamma(1), delta(1), epsilon(1). CF(0) has three main subunits: a(1), b(2) and c(9-12). The alpha and beta chains form an alternating ring which encloses part of the gamma chain. CF(1) is attached to CF(0) by a central stalk formed by the gamma and epsilon chains, while a peripheral stalk is formed by the delta and b chains.

Its subcellular location is the cell membrane. The catalysed reaction is ATP + H2O + 4 H(+)(in) = ADP + phosphate + 5 H(+)(out). Functionally, produces ATP from ADP in the presence of a proton gradient across the membrane. The alpha chain is a regulatory subunit. The sequence is that of ATP synthase subunit alpha from Dehalococcoides mccartyi (strain ATCC BAA-2266 / KCTC 15142 / 195) (Dehalococcoides ethenogenes (strain 195)).